The chain runs to 85 residues: Toxin Cll5c* (85 aa).

A signal peptide spans 1–17 (MNSLLIITACLVLFVWA). The LCN-type CS-alpha/beta domain occupies 18-83 (KEGYLVNKST…TYPLPNKSCS (66 aa)). 4 disulfide bridges follow: cysteine 29–cysteine 82, cysteine 33–cysteine 58, cysteine 42–cysteine 63, and cysteine 46–cysteine 65. Residues 84–85 (KK) constitute a propeptide, removed by a carboxypeptidase.

This sequence belongs to the long (4 C-C) scorpion toxin superfamily. Sodium channel inhibitor family. Beta subfamily. Expressed by the venom gland.

It localises to the secreted. Beta toxins bind voltage-independently at site-4 of sodium channels (Nav) and shift the voltage of activation toward more negative potentials thereby affecting sodium channel activation and promoting spontaneous and repetitive firing. The chain is Toxin Cll5c* from Centruroides limpidus (Mexican scorpion).